A 308-amino-acid chain; its full sequence is Homoserine kinase (308 aa).

95–105 (PQSRGLGSSAA) is a binding site for ATP.

It belongs to the GHMP kinase family. Homoserine kinase subfamily.

It localises to the cytoplasm. It carries out the reaction L-homoserine + ATP = O-phospho-L-homoserine + ADP + H(+). It participates in amino-acid biosynthesis; L-threonine biosynthesis; L-threonine from L-aspartate: step 4/5. Functionally, catalyzes the ATP-dependent phosphorylation of L-homoserine to L-homoserine phosphate. The chain is Homoserine kinase from Corynebacterium jeikeium (strain K411).